Reading from the N-terminus, the 218-residue chain is Uracil-DNA glycosylase (218 aa).

The Proton acceptor role is filled by aspartate 68.

This sequence belongs to the uracil-DNA glycosylase (UDG) superfamily. UNG family. In terms of assembly, homodimer. Interacts with protein OPG148. Component of the Uracil-DNA glycosylase(UDG)-OPG148-polymerase complex; OPG148 and UDG form a heterodimeric processivity factor that associates with OPG71 to form the processive polymerase holoenzyme.

It carries out the reaction Hydrolyzes single-stranded DNA or mismatched double-stranded DNA and polynucleotides, releasing free uracil.. Functionally, plays an essential role in viral replication as a component of the DNA polymerase processivity factor. Excises uracil residues from the DNA which can arise as a result of misincorporation of dUMP residues by DNA polymerase or due to deamination of cytosine. The sequence is that of Uracil-DNA glycosylase (OPG116) from Variola virus.